The primary structure comprises 1055 residues: Putative helicase/primase complex protein (1055 aa).

This sequence belongs to the asfivirus F1055L family.

In terms of biological role, may be involved in DNA replication. The protein is Putative helicase/primase complex protein of Ornithodoros (relapsing fever ticks).